We begin with the raw amino-acid sequence, 142 residues long: Large ribosomal subunit protein bL17 (142 aa).

This sequence belongs to the bacterial ribosomal protein bL17 family. Part of the 50S ribosomal subunit. Contacts protein L32.

The protein is Large ribosomal subunit protein bL17 of Brucella abortus (strain S19).